The chain runs to 113 residues: Prefoldin subunit beta (113 aa).

It belongs to the prefoldin subunit beta family. Heterohexamer of two alpha and four beta subunits.

The protein localises to the cytoplasm. In terms of biological role, molecular chaperone capable of stabilizing a range of proteins. Seems to fulfill an ATP-independent, HSP70-like function in archaeal de novo protein folding. This is Prefoldin subunit beta from Methanococcus maripaludis (strain DSM 14266 / JCM 13030 / NBRC 101832 / S2 / LL).